The primary structure comprises 486 residues: Cardiolipin synthase A (486 aa).

2 helical membrane-spanning segments follow: residues 3–23 and 38–58; these read TFYTVISWLMVFGYWLLIAGV and MAWLLVIYILPLFGIVAYLSF. PLD phosphodiesterase domains lie at 219-246 and 399-426; these read MDLRQHRKVVLIDNYIAYTGSMNMVDPR and EDGLLHTKSVLVDGQLSLVGTVNLDMRS. Active-site residues include H224, K226, D231, H404, K406, and D411.

This sequence belongs to the phospholipase D family. Cardiolipin synthase subfamily. ClsA sub-subfamily.

The protein localises to the cell inner membrane. It catalyses the reaction 2 a 1,2-diacyl-sn-glycero-3-phospho-(1'-sn-glycerol) = a cardiolipin + glycerol. In terms of biological role, catalyzes the reversible phosphatidyl group transfer from one phosphatidylglycerol molecule to another to form cardiolipin (CL) (diphosphatidylglycerol) and glycerol. This chain is Cardiolipin synthase A, found in Serratia proteamaculans (strain 568).